The following is a 1392-amino-acid chain: DNA-directed RNA polymerase subunit beta (1392 aa).

This sequence belongs to the RNA polymerase beta chain family. In terms of assembly, the RNAP catalytic core consists of 2 alpha, 1 beta, 1 beta' and 1 omega subunit. When a sigma factor is associated with the core the holoenzyme is formed, which can initiate transcription.

It catalyses the reaction RNA(n) + a ribonucleoside 5'-triphosphate = RNA(n+1) + diphosphate. Its function is as follows. DNA-dependent RNA polymerase catalyzes the transcription of DNA into RNA using the four ribonucleoside triphosphates as substrates. In Neisseria gonorrhoeae (strain ATCC 700825 / FA 1090), this protein is DNA-directed RNA polymerase subunit beta.